A 257-amino-acid polypeptide reads, in one-letter code: Imidazole glycerol phosphate synthase subunit HisF (257 aa).

Residues D11 and D130 contribute to the active site.

Belongs to the HisA/HisF family. In terms of assembly, heterodimer of HisH and HisF.

Its subcellular location is the cytoplasm. It carries out the reaction 5-[(5-phospho-1-deoxy-D-ribulos-1-ylimino)methylamino]-1-(5-phospho-beta-D-ribosyl)imidazole-4-carboxamide + L-glutamine = D-erythro-1-(imidazol-4-yl)glycerol 3-phosphate + 5-amino-1-(5-phospho-beta-D-ribosyl)imidazole-4-carboxamide + L-glutamate + H(+). It functions in the pathway amino-acid biosynthesis; L-histidine biosynthesis; L-histidine from 5-phospho-alpha-D-ribose 1-diphosphate: step 5/9. In terms of biological role, IGPS catalyzes the conversion of PRFAR and glutamine to IGP, AICAR and glutamate. The HisF subunit catalyzes the cyclization activity that produces IGP and AICAR from PRFAR using the ammonia provided by the HisH subunit. This chain is Imidazole glycerol phosphate synthase subunit HisF, found in Prochlorococcus marinus (strain MIT 9515).